The following is a 145-amino-acid chain: uncharacterized protein (145 aa).

Residues 1 to 21 (MWFLVKATFWFSLVLVLLPFL) form a helical membrane-spanning segment. The interval 109–145 (TPAESVPSAEATEKAEPAFKRMPVPEHRLDPGPASGK) is disordered. Basic and acidic residues predominate over residues 119-138 (ATEKAEPAFKRMPVPEHRLD).

Its subcellular location is the membrane. This is an uncharacterized protein from Rhizobium meliloti (strain 1021) (Ensifer meliloti).